A 526-amino-acid chain; its full sequence is MAEYVFSDAPKDSHGNGVKDAVPGKQPEELPPAPRYFQGENTAGFMRPVRFEGDITNLEVVGEIPKSIEGTFYRVMPEPHLPSFIPNDPWFNGDGNISGFYFKDGHVDLKQRYVRTEKFVREAEARRSLLGKYRNRYTDLVEFKIRSTANTNIVYWRGQLLALKEDSPPYAMDPETLETFGVYDFDGQLPSLTFTAHPKFDPVTREMVCFGYEAKGDGTRDICYYSFGPDGKIAETVWLVSPVCGMIHDFAVTENFVIFPIIPLVCDVERMKQGGDHWQWDYSIPMYIGVLPRRGAQGSDVKWFEAPHGFAGHVANAFEDDKGHIQLQMAYAKDNVFFWWPDANGKGPRPGEVEAHFANFVLDYQSDKLPLAEPTYLVDDDMEFPRIDDRVATRKHKHTFFCIFDRKPGVTDFEFVMPRAGGGAPMSNGLAHLNHETGDIQRYLPGPRKLTGECIFIPRNSEAAEGDGYVMVLLANYEDMCSELAVLDTKDLTNEVALIKLPVRLRPGLHGNWVDKSDVDGHPAPL.

Positions 1 to 33 are disordered; sequence MAEYVFSDAPKDSHGNGVKDAVPGKQPEELPPA. 2 residues coordinate piceatannol: Tyr-133 and Lys-164. Residues Tyr-133 and Lys-164 each contribute to the trans-resveratrol site. The Fe cation site is built by His-197, His-248, and His-313. Residue Glu-383 participates in piceatannol binding. Glu-383 is a trans-resveratrol binding site. His-510 provides a ligand contact to Fe cation.

The protein belongs to the carotenoid oxygenase family. Requires Fe(2+) as cofactor.

It carries out the reaction trans-resveratrol + O2 = 3,5-dihydroxybenzaldehyde + 4-hydroxybenzaldehyde. It catalyses the reaction piceatannol + O2 = 3,5-dihydroxybenzaldehyde + 3,4-dihydroxybenzaldehyde. Dioxygenase that cleaves the interphenyl C-alpha-C-beta double bond of resveratrol to yield 3,5-dihydroxybenzaldehyde and 4-hydroxybenzaldehyde. Also cleaves piceatannol, a compound that differs from resveratrol only in the occurrence of an additional hydroxyl group, which leads to the production of 3,4-dihydroxybenzaldehyde and 3,5-hydroxybenzaldehyde. Is not able to cleave trans-stilbene, 4-monohydroxy-trans-stilbene, 3,5-dihydroxy-trans-stilbene (pinosylvin), trismethoxy-resveratrol, and 3,3',5-trihydroxy-4'-methoxystilbene-3-O-beta-D-glucoside. Is not involved in carotenoid metabolism. This chain is Carotenoid cleavage oxygenase 1, found in Neurospora crassa (strain ATCC 24698 / 74-OR23-1A / CBS 708.71 / DSM 1257 / FGSC 987).